The chain runs to 419 residues: UDP-N-acetylglucosamine 1-carboxyvinyltransferase (419 aa).

Phosphoenolpyruvate is bound at residue 22 to 23; that stretch reads KN. Arg92 lines the UDP-N-acetyl-alpha-D-glucosamine pocket. Cys116 (proton donor) is an active-site residue. Cys116 is modified (2-(S-cysteinyl)pyruvic acid O-phosphothioketal). Residues Asp306 and Ile328 each contribute to the UDP-N-acetyl-alpha-D-glucosamine site.

Belongs to the EPSP synthase family. MurA subfamily.

It is found in the cytoplasm. The catalysed reaction is phosphoenolpyruvate + UDP-N-acetyl-alpha-D-glucosamine = UDP-N-acetyl-3-O-(1-carboxyvinyl)-alpha-D-glucosamine + phosphate. Its pathway is cell wall biogenesis; peptidoglycan biosynthesis. Cell wall formation. Adds enolpyruvyl to UDP-N-acetylglucosamine. This is UDP-N-acetylglucosamine 1-carboxyvinyltransferase from Pseudoalteromonas translucida (strain TAC 125).